The sequence spans 4911 residues: Histone-lysine N-methyltransferase 2C (4911 aa).

Residues 1–101 form a disordered region; the sequence is MSSEEDKSVE…EDAEAEVDNS (101 aa). Residues 12 to 28 are compositionally biased toward pro residues; the sequence is PQPPPPPPEEPGAPAPS. Phosphoserine occurs at positions 28 and 46. Positions 34-46 form a DNA-binding region, a.T hook; it reads KRPRGRPRKDGAS. Over residues 50 to 59 the composition is skewed to basic residues; sequence RARKKPRSRG. Over residues 64 to 81 the composition is skewed to acidic residues; that stretch reads EDEDSMDGLETTETETIV. Ser-89 is subject to Phosphoserine. Residues 92 to 112 adopt a coiled-coil conformation; it reads EDAEAEVDNSKQLIPTLQRSV. Ser-113 carries the post-translational modification Phosphoserine. The tract at residues 164 to 203 is disordered; the sequence is RNQPSNKKDIDDNSNGTYEKMQNSAPRKQRGQRKERSPQQ. Residues 176 to 189 are compositionally biased toward polar residues; the sequence is NSNGTYEKMQNSAP. Residue Ser-200 is modified to Phosphoserine. The C2HC pre-PHD-type 1; degenerate zinc-finger motif lies at 227-262; the sequence is ELSLVGLPDAIDIQALFDSTGTCWAHHRCVEWSLGV. 4 consecutive PHD-type zinc fingers follow at residues 283–331, 341–391, 388–438, and 464–520; these read ERCA…PEHI, DANC…CKVC, CKVC…CRIC, and DNLC…CKHL. The RING-type zinc finger occupies 344–389; the sequence is CAVCDSPGDLLDQFFCTTCGQHYHGMCLDIAVTPLKRAGWQCPECK. A DHHC domain is found at 436 to 489; sequence RICIECGTRSSSQWHHNCLICDNCYQQQDNLCPFCGKCYHPELQKDMLHCNMCK. Residues 644–672 adopt a coiled-coil conformation; sequence EDKMEVTENIEVVTHQITVQQEQLQLLEE. Residues 721–730 show a composition bias toward basic and acidic residues; that stretch reads QGEKEQKENS. Residues 721-742 are disordered; sequence QGEKEQKENSELSTGLMDSEMT. Residue Lys-758 is modified to N6-acetyllysine. The span at 763–791 shows a compositional bias: low complexity; it reads SSETESSFSSSADISKADVSSSPTPSSDL. Disordered stretches follow at residues 763–798, 828–864, and 885–912; these read SSETESSFSSSADISKADVSSSPTPSSDLPSHDMLH, PAITKRKFSPGRPRSKQGAWSTHNTVSPPSWSPDISE, and GRGSGFPGKRRPRGAGLSGRGGRGRSKL. Residues 830-842 show a composition bias toward basic residues; it reads ITKRKFSPGRPRS. The span at 845–856 shows a compositional bias: polar residues; it reads GAWSTHNTVSPP. Residue Ser-854 is modified to Phosphoserine. 3 PHD-type zinc fingers span residues 957 to 1010, 1007 to 1057, and 1084 to 1139; these read QDMC…CTVC, CTVC…CVWC, and LSSC…CRPY. Residues 1215-1324 form a disordered region; that stretch reads AVLQTPPDIQ…LPCRDDGWSE (110 aa). Positions 1224 to 1270 are enriched in basic and acidic residues; the sequence is QSEHSRDGEMDDSREGELMDCDGKSESSPEREAVDDETKGVEGTDGV. Position 1301 is a phosphoserine (Ser-1301). A coiled-coil region spans residues 1338–1366; the sequence is TESTEKIKKRYRKRKNKLEETFPAYLQEA. The span at 1406-1416 shows a compositional bias: low complexity; that stretch reads PSLDPLLSSSS. Disordered regions lie at residues 1406–1431 and 1458–1485; these read PSLDPLLSSSSAPTKSGTHGPADDPL and HSDIGPVTDDPSSLPQPNVNQSSRPLSE. The span at 1467 to 1482 shows a compositional bias: polar residues; sequence DPSSLPQPNVNQSSRP. The residue at position 1508 (Lys-1508) is an N6-acetyllysine. Disordered stretches follow at residues 1604–1630 and 1709–2448; these read FNPMASDPNNSWTSSAPTVEGENDTMS and VQMS…SPVA. 2 stretches are compositionally biased toward polar residues: residues 1610-1620 and 1709-1727; these read DPNNSWTSSAP and VQMSNDSMKRQQQQDSIDP. The span at 1729–1753 shows a compositional bias: basic and acidic residues; sequence SRIDSELFKDPLKQRESEHEQEWKF. Residues 1754-1787 adopt a coiled-coil conformation; it reads RQQMRQKSKQQAKIEATQKLEQVKNEQQQQQQQQ. Lys-1772 carries the post-translational modification N6-acetyllysine. The span at 1788-1823 shows a compositional bias: polar residues; sequence FGSQHLLVQSGSDTPSSGIQSPLTPQPGNGNMSPAQ. Residues 1851-1860 are compositionally biased toward pro residues; it reads QAPPPPPAPS. The span at 1861–1875 shows a compositional bias: low complexity; sequence RIPIQDSLSQAQTSQ. Over residues 1927–1945 the composition is skewed to polar residues; it reads TPLSSVSRPLQMNETTANR. A Phosphoserine modification is found at Ser-1987. An N6-acetyllysine modification is found at Lys-2009. Composition is skewed to polar residues over residues 2054–2065, 2085–2094, 2115–2131, and 2144–2159; these read QDPYGSVSQASR, FSHNQSNDPY, AFSQPGTISRPTSQDPY, and SYSQSSGTARSNTDPY. A compositionally biased stretch (low complexity) spans 2173–2187; the sequence is PYSQQPQTPRPSTQT. 3 stretches are compositionally biased toward polar residues: residues 2302–2319, 2335–2353, and 2362–2375; these read SPMTPRSQSDSFGTSQTA, CASSNSPMHSQGQQFSGVS, and SGVTDTQNTVNMAQ. Residues 2377-2389 show a composition bias toward basic and acidic residues; the sequence is DTEKLRQRQKLRE. Over residues 2390–2399 the composition is skewed to low complexity; that stretch reads IILQQQQQKK. An asymmetric dimethylarginine mark is found at Arg-2454 and Arg-2571. Disordered regions lie at residues 2589 to 2694, 2793 to 2887, 2925 to 2954, and 2989 to 3029; these read RHGN…SDDP, EPKK…RETA, EKSDNSDIRPSGSPPPPTLPASPSNHVSSL, and VNPG…SGPQ. Polar residues-rich tracts occupy residues 2629 to 2645 and 2661 to 2682; these read PPSQQEQGHSVHSSSMV and PLSTSVPSETTSDNLQITTQPS. Basic and acidic residues predominate over residues 2793–2811; sequence EPKKKEQENKTLVLSDKHS. N6-acetyllysine is present on residues Lys-2802 and Lys-2809. Positions 2814–2832 are enriched in polar residues; sequence KKSTVTNEVKTEVLSPNSK. The residue at position 2828 (Ser-2828) is a Phosphoserine. At Lys-2832 the chain carries N6-acetyllysine. A compositionally biased stretch (basic and acidic residues) spans 2833–2849; the sequence is VESKCETEKNDENKDNV. Positions 2851–2860 are enriched in polar residues; sequence TPCSQASAHS. Positions 2861-2884 are enriched in basic and acidic residues; it reads DLNDGEKTSLHPCDPDLFEKRTNR. An N6-acetyllysine modification is found at Lys-2867. Positions 3011–3029 are enriched in low complexity; the sequence is TQTGPQTSQSGTSSMSGPQ. 3 coiled-coil regions span residues 3054–3081, 3173–3272, and 3391–3433; these read LLQDLLDQERQEQQQQRQMQAMIRQRSE, NDSQ…QQQQ, and FSES…EMEQ. Residues 3205–3221 are compositionally biased toward basic residues; that stretch reads HRKSKKALSAKQRTAKK. Disordered stretches follow at residues 3205-3241, 3353-3409, 3527-3583, 3596-3919, and 4024-4053; these read HRKSKKALSAKQRTAKKAGREFPEEDAEQLKHVTEQQ, PPIA…EQQE, PNFS…HSYP, IIPE…MANG, and VKEEPPEPVPSPIIPILPSTAGKSSESRRN. Basic and acidic residues-rich tracts occupy residues 3222–3238 and 3395–3409; these read AGREFPEEDAEQLKHVT and FQERERKERLREQQE. Composition is skewed to polar residues over residues 3527 to 3549, 3564 to 3583, 3637 to 3658, and 3684 to 3701; these read PNFSSVKQGHGNLSGTSFQQSPV, ANSSLPCGQDSTITHGHSYP, ISETTSTPAVSTPSELPQQADQ, and LPNSDFSQATPNQQTYAN. Residues 3703-3725 are compositionally biased toward basic and acidic residues; that stretch reads EVDKLSMETPAKTEEIKLEKAET. Residue Lys-3714 is modified to N6-acetyllysine. Residue Ser-3758 is modified to Phosphoserine. Residues 3803 to 3812 are compositionally biased toward basic and acidic residues; sequence DCTKDNKLVE. Over residues 3878 to 3892 the composition is skewed to polar residues; sequence MYSSTDTFTHLKQQN. Residues 3897-3911 are compositionally biased toward pro residues; sequence PPTPPASLPPTPPPM. Ser-4034 is subject to Phosphoserine. Position 4139 is an asymmetric dimethylarginine (Arg-4139). Ser-4267 carries the phosphoserine modification. The C2HC pre-PHD-type 2 zinc-finger motif lies at 4399-4439; it reads YRKCCFCHEEGDGLTDGPARLLNLDLDLWVHLNCALWSTEV. Residues 4460 to 4507 form a PHD-type 8 zinc finger; the sequence is MKCVFCHKTGATSGCHRFRCTNIYHFTCAIKAQCMFFKDKTMLCPMHK. Residues 4545–4605 form the FYR N-terminal domain; sequence DHTFRVGSLI…CRYLCSIEEK (61 aa). The FYR C-terminal domain occupies 4606 to 4691; that stretch reads DGRPVFVIRI…EACENYTFRY (86 aa). The WDR5 interaction motif (WIN) motif lies at 4707–4712; it reads GCARSE. The region spanning 4771–4887 is the SET domain; that stretch reads SNVYLARSRI…KGEELCYDYK (117 aa). Residues Tyr-4825 and 4848–4849 contribute to the S-adenosyl-L-methionine site; that span reads NH. Residues Cys-4851, Cys-4899, Cys-4901, and Cys-4906 each coordinate Zn(2+). The region spanning 4895–4911 is the Post-SET domain; that stretch reads HKIPCHCGAVNCRKWMN.

Belongs to the class V-like SAM-binding methyltransferase superfamily. Histone-lysine methyltransferase family. TRX/MLL subfamily. Component of the MLL3 complex (also named ASCOM complex), at least composed of catalytic subunit KMT2C/MLL3, ASH2L, RBBP5, WDR5, NCOA6, DPY30, KDM6A, PAXIP1/PTIP, PAGR1 and alpha- and beta-tubulin. Forms a core complex with the evolutionary conserved subcomplex WRAD composed of WDR5, RBBP5, ASH2L/ASH2 and DPY30 subunits; WRAD differentially stimulates the methyltransferase activity. Interacts (via WIN motif) with WDR5. As to expression, highly expressed in testis and ovary, followed by brain and liver. Also expressed in placenta, peripherical blood, fetal thymus, heart, lung and kidney. Within brain, expression was highest in hippocampus, caudate nucleus, and substantia nigra. Not detected in skeletal muscle and fetal liver.

The protein localises to the nucleus. It catalyses the reaction L-lysyl(4)-[histone H3] + S-adenosyl-L-methionine = N(6)-methyl-L-lysyl(4)-[histone H3] + S-adenosyl-L-homocysteine + H(+). Functionally, histone methyltransferase that catalyzes methyl group transfer from S-adenosyl-L-methionine to the epsilon-amino group of 'Lys-4' of histone H3 (H3K4). Part of chromatin remodeling machinery predominantly forms H3K4me1 methylation marks at active chromatin sites where transcription and DNA repair take place. Likely plays a redundant role with KMT2D in enriching H3K4me1 mark on primed and active enhancer elements. This chain is Histone-lysine N-methyltransferase 2C (KMT2C), found in Homo sapiens (Human).